A 295-amino-acid chain; its full sequence is Small ribosomal subunit protein uS2 (295 aa).

N-acetylserine is present on Ser2. Ser43 is modified (phosphoserine). The residue at position 52 (Lys52) is an N6-acetyllysine. An interaction with PPP1R16B region spans residues 54–113; that stretch reads TWEKLLLAARAIVAIENPADVSVISSRNTGQRAVLKFAAATGATPIAGRFTPGTFTNQIQ. Residue Lys89 is modified to N6-acetyllysine; alternate. A Glycyl lysine isopeptide (Lys-Gly) (interchain with G-Cter in SUMO2); alternate cross-link involves residue Lys89. Thr97 is subject to Phosphothreonine. Laminin-binding stretches follow at residues 161-180 and 205-229; these read IPCNNKGAHSVGLMWWMLAR and RDPEEIEKEEQAAAEKAVTKEEFQG. [DE]-W-[ST] repeat units follow at residues 230–232, 247–249, 266–268, 275–277, and 293–295; these read EWT, DWS, and EWS. The tract at residues 242–295 is laminin-binding; the sequence is QPEVADWSEGVQVPSVPIQQFPTEDWSAQPATEDWSAAPTAQATEWVGATTEWS. Residues 266–295 are disordered; the sequence is DWSAQPATEDWSAAPTAQATEWVGATTEWS.

It belongs to the universal ribosomal protein uS2 family. As to quaternary structure, monomer (37LRP) and homodimer (67LR). Component of the small ribosomal subunit. Mature ribosomes consist of a small (40S) and a large (60S) subunit. The 40S subunit contains about 33 different proteins and 1 molecule of RNA (18S). The 60S subunit contains about 49 different proteins and 3 molecules of RNA (28S, 5.8S and 5S). Interacts with RPS21. Interacts with several laminins including at least LAMB1. Interacts with MDK. The mature dimeric form interacts with PPP1R16B (via its fourth ankyrin repeat). Interacts with PPP1CA only in the presence of PPP1R16B. Post-translationally, acylated. Acylation may be a prerequisite for conversion of the monomeric 37 kDa laminin receptor precursor (37LRP) to the mature dimeric 67 kDa laminin receptor (67LR), and may provide a mechanism for membrane association. In terms of processing, cleaved by stromelysin-3 (ST3) at the cell surface. Cleavage by stromelysin-3 may be a mechanism to alter cell-extracellular matrix interactions.

It is found in the cell membrane. The protein resides in the cytoplasm. Its subcellular location is the nucleus. Required for the assembly and/or stability of the 40S ribosomal subunit. Required for the processing of the 20S rRNA-precursor to mature 18S rRNA in a late step of the maturation of 40S ribosomal subunits. Also functions as a cell surface receptor for laminin. Plays a role in cell adhesion to the basement membrane and in the consequent activation of signaling transduction pathways. May play a role in cell fate determination and tissue morphogenesis. Also acts as a receptor for several other ligands, including the pathogenic prion protein, viruses, and bacteria. Acts as a PPP1R16B-dependent substrate of PPP1CA. The protein is Small ribosomal subunit protein uS2 of Chlorocebus aethiops (Green monkey).